The following is a 332-amino-acid chain: Holliday junction branch migration complex subunit RuvB (332 aa).

The interval 1–181 (MSRILDNEMM…FGITGHMEYY (181 aa)) is large ATPase domain (RuvB-L). Residues Leu-20, Arg-21, Gly-62, Lys-65, Thr-66, Thr-67, 128–130 (EDF), Arg-171, Tyr-181, and Arg-218 contribute to the ATP site. A Mg(2+)-binding site is contributed by Thr-66. The tract at residues 182–252 (AHADLTEIVE…ITDKALTMLD (71 aa)) is small ATPAse domain (RuvB-S). Positions 255-332 (HEGLDYVDQK…EHLGYEYSEK (78 aa)) are head domain (RuvB-H). DNA-binding residues include Arg-291, Arg-310, Arg-312, and Arg-315.

Belongs to the RuvB family. Homohexamer. Forms an RuvA(8)-RuvB(12)-Holliday junction (HJ) complex. HJ DNA is sandwiched between 2 RuvA tetramers; dsDNA enters through RuvA and exits via RuvB. An RuvB hexamer assembles on each DNA strand where it exits the tetramer. Each RuvB hexamer is contacted by two RuvA subunits (via domain III) on 2 adjacent RuvB subunits; this complex drives branch migration. In the full resolvosome a probable DNA-RuvA(4)-RuvB(12)-RuvC(2) complex forms which resolves the HJ.

It is found in the cytoplasm. It catalyses the reaction ATP + H2O = ADP + phosphate + H(+). Its function is as follows. The RuvA-RuvB-RuvC complex processes Holliday junction (HJ) DNA during genetic recombination and DNA repair, while the RuvA-RuvB complex plays an important role in the rescue of blocked DNA replication forks via replication fork reversal (RFR). RuvA specifically binds to HJ cruciform DNA, conferring on it an open structure. The RuvB hexamer acts as an ATP-dependent pump, pulling dsDNA into and through the RuvAB complex. RuvB forms 2 homohexamers on either side of HJ DNA bound by 1 or 2 RuvA tetramers; 4 subunits per hexamer contact DNA at a time. Coordinated motions by a converter formed by DNA-disengaged RuvB subunits stimulates ATP hydrolysis and nucleotide exchange. Immobilization of the converter enables RuvB to convert the ATP-contained energy into a lever motion, pulling 2 nucleotides of DNA out of the RuvA tetramer per ATP hydrolyzed, thus driving DNA branch migration. The RuvB motors rotate together with the DNA substrate, which together with the progressing nucleotide cycle form the mechanistic basis for DNA recombination by continuous HJ branch migration. Branch migration allows RuvC to scan DNA until it finds its consensus sequence, where it cleaves and resolves cruciform DNA. This Streptococcus pneumoniae serotype 19F (strain G54) protein is Holliday junction branch migration complex subunit RuvB.